Here is a 266-residue protein sequence, read N- to C-terminus: UPF0354 protein lmo1608 (266 aa).

Belongs to the UPF0354 family.

The chain is UPF0354 protein lmo1608 from Listeria monocytogenes serovar 1/2a (strain ATCC BAA-679 / EGD-e).